The sequence spans 114 residues: Large ribosomal subunit protein bL19 (114 aa).

The protein belongs to the bacterial ribosomal protein bL19 family.

Its function is as follows. This protein is located at the 30S-50S ribosomal subunit interface and may play a role in the structure and function of the aminoacyl-tRNA binding site. The protein is Large ribosomal subunit protein bL19 of Clostridium acetobutylicum (strain ATCC 824 / DSM 792 / JCM 1419 / IAM 19013 / LMG 5710 / NBRC 13948 / NRRL B-527 / VKM B-1787 / 2291 / W).